Consider the following 593-residue polypeptide: NADH-quinone oxidoreductase subunit C/D (593 aa).

Residues 1–184 (MTADNAIFIP…DPYSLTLAKQ (184 aa)) form an NADH dehydrogenase I subunit C region. Residues 208–593 (DYMFLNLGPN…IDFVMADVDR (386 aa)) are NADH dehydrogenase I subunit D.

It in the N-terminal section; belongs to the complex I 30 kDa subunit family. In the C-terminal section; belongs to the complex I 49 kDa subunit family. In terms of assembly, NDH-1 is composed of 13 different subunits. Subunits NuoB, CD, E, F, and G constitute the peripheral sector of the complex.

Its subcellular location is the cell inner membrane. It carries out the reaction a quinone + NADH + 5 H(+)(in) = a quinol + NAD(+) + 4 H(+)(out). NDH-1 shuttles electrons from NADH, via FMN and iron-sulfur (Fe-S) centers, to quinones in the respiratory chain. The immediate electron acceptor for the enzyme in this species is believed to be ubiquinone. Couples the redox reaction to proton translocation (for every two electrons transferred, four hydrogen ions are translocated across the cytoplasmic membrane), and thus conserves the redox energy in a proton gradient. The sequence is that of NADH-quinone oxidoreductase subunit C/D from Pseudomonas putida (strain ATCC 700007 / DSM 6899 / JCM 31910 / BCRC 17059 / LMG 24140 / F1).